A 208-amino-acid polypeptide reads, in one-letter code: 3-demethoxyubiquinol 3-hydroxylase (208 aa).

Glutamate 57, glutamate 87, histidine 90, glutamate 139, glutamate 171, and histidine 174 together coordinate Fe cation.

It belongs to the COQ7 family. It depends on Fe cation as a cofactor.

It is found in the cell membrane. The enzyme catalyses a 5-methoxy-2-methyl-3-(all-trans-polyprenyl)benzene-1,4-diol + AH2 + O2 = a 3-demethylubiquinol + A + H2O. The protein operates within cofactor biosynthesis; ubiquinone biosynthesis. In terms of biological role, catalyzes the hydroxylation of 2-nonaprenyl-3-methyl-6-methoxy-1,4-benzoquinol during ubiquinone biosynthesis. This Burkholderia cenocepacia (strain HI2424) protein is 3-demethoxyubiquinol 3-hydroxylase.